We begin with the raw amino-acid sequence, 428 residues long: tRNA(Ile)-lysidine synthase (428 aa).

25 to 30 (SGGIDS) serves as a coordination point for ATP.

The protein belongs to the tRNA(Ile)-lysidine synthase family.

It is found in the cytoplasm. It catalyses the reaction cytidine(34) in tRNA(Ile2) + L-lysine + ATP = lysidine(34) in tRNA(Ile2) + AMP + diphosphate + H(+). In terms of biological role, ligates lysine onto the cytidine present at position 34 of the AUA codon-specific tRNA(Ile) that contains the anticodon CAU, in an ATP-dependent manner. Cytidine is converted to lysidine, thus changing the amino acid specificity of the tRNA from methionine to isoleucine. In Haemophilus ducreyi (strain 35000HP / ATCC 700724), this protein is tRNA(Ile)-lysidine synthase.